A 253-amino-acid chain; its full sequence is Polyprenal reductase (253 aa).

The next 4 helical transmembrane spans lie at 18 to 38 (LSFF…PEFL), 78 to 98 (FLSL…IIFG), 123 to 143 (HYLV…ISLY), and 200 to 220 (IIYS…VWVI).

The protein belongs to the steroid 5-alpha reductase family. Polyprenal reductase subfamily.

It localises to the endoplasmic reticulum membrane. It carries out the reaction a di-trans,poly-cis-dolichal + NADP(+) = a di-trans,poly-cis-polyprenal + NADPH + H(+). It participates in protein modification; protein glycosylation. Functionally, plays a key role in early steps of protein N-linked glycosylation by being involved in the conversion of polyprenol into dolichol. Acts as a polyprenal reductase that mediates the reduction of polyprenal into dolichal in a NADP-dependent mechanism. Dolichols are required for the synthesis of dolichol-linked monosaccharides and the oligosaccharide precursor used for N-glycosylation. This is Polyprenal reductase from Saccharomyces cerevisiae (strain ATCC 204508 / S288c) (Baker's yeast).